The following is a 58-amino-acid chain: MSEVKIGKNESLDAALRRFKRICQKSGVLSEARRREHYEKPSVRRKKKSEAARKRRWH.

Basic and acidic residues predominate over residues 32–42; sequence ARRREHYEKPS. The tract at residues 32–58 is disordered; that stretch reads ARRREHYEKPSVRRKKKSEAARKRRWH. Residues 43–58 are compositionally biased toward basic residues; sequence VRRKKKSEAARKRRWH.

It belongs to the bacterial ribosomal protein bS21 family.

This Moorella thermoacetica (strain ATCC 39073 / JCM 9320) protein is Small ribosomal subunit protein bS21.